The following is a 168-amino-acid chain: uncharacterized protein (168 aa).

One can recognise an N-acetyltransferase domain in the interval 14–168 (IDIPLLDAAS…EYKHWIYVTK (155 aa)).

It belongs to the acetyltransferase family.

This is an uncharacterized protein from Bacillus subtilis (strain 168).